A 262-amino-acid chain; its full sequence is Putative cysteine-rich repeat secretory protein 24 (262 aa).

Residues 1–29 form the signal peptide; sequence MSLSSSVTKHLISASILAIVAMQLPSVHS. Gnk2-homologous domains lie at 39-141 and 147-259; these read YLHH…SIYT and YKNN…LYPF.

This sequence belongs to the cysteine-rich repeat secretory protein family.

The protein localises to the secreted. The polypeptide is Putative cysteine-rich repeat secretory protein 24 (CRRSP24) (Arabidopsis thaliana (Mouse-ear cress)).